Here is a 484-residue protein sequence, read N- to C-terminus: Probable UDP-N-acetylglucosamine pyrophosphorylase (484 aa).

The Substrate binding signature appears at 107-110 (LAGG). UTP is bound by residues 107-110 (LAGG), Lys-121, Gln-200, and Gly-226. Substrate is bound at residue Asn-227. Residue Asp-255 participates in UTP binding. A Substrate binding motif is present at residues 304 to 305 (EY). UTP is bound at residue Lys-377. A substrate-binding site is contributed by Lys-407.

It belongs to the UDPGP type 1 family.

Its subcellular location is the cytoplasm. It catalyses the reaction N-acetyl-alpha-D-glucosamine 1-phosphate + UTP + H(+) = UDP-N-acetyl-alpha-D-glucosamine + diphosphate. It participates in nucleotide-sugar biosynthesis; UDP-N-acetyl-alpha-D-glucosamine biosynthesis; UDP-N-acetyl-alpha-D-glucosamine from N-acetyl-alpha-D-glucosamine 1-phosphate: step 1/1. The protein is Probable UDP-N-acetylglucosamine pyrophosphorylase of Caenorhabditis elegans.